We begin with the raw amino-acid sequence, 774 residues long: Potassium/sodium hyperpolarization-activated cyclic nucleotide-gated channel 3 (774 aa).

The interval 1 to 48 (MEAEQRPAAGASEGATPGLEAVPPVAPPPATAASGPIPKSGPEPKRRH) is disordered. Over 1–97 (MEAEQRPAAG…PYSDFRFYWD (97 aa)) the chain is Cytoplasmic. An involved in subunit assembly region spans residues 46 to 91 (RRHLGTLLQPTVNKFSLRVFGSHKAVEIEQERVKSAGAWIIHPYSD). Residues 98–118 (LIMLLLMVGNLIVLPVGITFF) traverse the membrane as a helical segment. Residues 119–124 (KEENSP) are Extracellular-facing. A helical transmembrane segment spans residues 125–145 (PWIVFNVLSDTFFLLDLVLNF). Residues 146-171 (RTGIVVEEGAEILLAPRAIRTRYLRT) are Cytoplasmic-facing. A helical membrane pass occupies residues 172–192 (WFLVDLISSIPVDYIFLVVEL). Topologically, residues 193 to 201 (EPRLDAEVY) are extracellular. A helical; Voltage-sensor transmembrane segment spans residues 202-222 (KTARALRIVRFTKILSLLRLL). The Cytoplasmic portion of the chain corresponds to 223-253 (RLSRLIRYIHQWEEIFHMTYDLASAVVRIFN). A helical transmembrane segment spans residues 254–274 (LIGMMLLLCHWDGCLQFLVPM). Residues 275 to 297 (LQDFPPDCWVSINHMVNHSWGRQ) lie on the Extracellular side of the membrane. The N-linked (GlcNAc...) asparagine glycan is linked to Asn-291. The pore-forming intramembrane region spans 298-319 (YSHALFKAMSHMLCIGYGQQAP). The Extracellular segment spans residues 320–329 (VGMPDVWLTM). Residues 330–350 (LSMIVGATCYAMFIGHATALI) form a helical membrane-spanning segment. Over 351 to 774 (QSLDSSRRQY…PRGLQLSANM (424 aa)) the chain is Cytoplasmic. The tract at residues 354–774 (DSSRRQYQEK…PRGLQLSANM (421 aa)) is interaction with KCTD3. Gly-492, Glu-493, Cys-495, Arg-502, Thr-503, Arg-543, and Arg-546 together coordinate 3',5'-cyclic AMP. Position 634 is a phosphoserine (Ser-634). The disordered stretch occupies residues 682–774 (SLSRAGRSQV…PRGLQLSANM (93 aa)). A compositionally biased stretch (pro residues) spans 751–763 (TAQPPRPPVPEPA).

It belongs to the potassium channel HCN family. In terms of assembly, homotetramer. The potassium channel is composed of a homo- or heterotetrameric complex of pore-forming subunits. Interacts with HCN11. Interacts with KCTD3; this interaction increases cell surface expression and current density of this channel. Interacts with PEX5L. In terms of tissue distribution, detected in brain.

Its subcellular location is the cell membrane. It carries out the reaction K(+)(in) = K(+)(out). The enzyme catalyses Na(+)(in) = Na(+)(out). Its activity is regulated as follows. Unlike HCN2 and HCN4, HCN3 is insensitive to cyclic nucleotides, such as cAMP or cGMP. This lack of sensitivity of HCN3, despite harboring a functional cyclic nucleotide-binding domain (CNBD), may be explained by its shorter C-terminal sequence, which may alter the normal autoinhibition of the channel. Inhibited by Cs(1+) and ZD7288. Phosphatidylinositol-4,5-bisphosphate (PIP(2)) shifts HCN3 activation to more depolarized potentials and accelerated activation kinetics. Hyperpolarization-activated ion channel that are permeable to sodium and potassium ions, with an about 3:1 preference for potassium ions. Contributes to the native pacemaker currents in heart (If) and in neurons (Ih). In particular, plays a pivotal role in maintaining excitability and promoting rhythmic burst firing within hypothalamic nuclei. Exerts a significant influence on the configuration of the cardiac action potential waveform. Does not appear to play a prominent role in the processing of acute, neuropathic, or inflammatory pain. The polypeptide is Potassium/sodium hyperpolarization-activated cyclic nucleotide-gated channel 3 (HCN3) (Homo sapiens (Human)).